The sequence spans 221 residues: Very-long-chain (3R)-3-hydroxyacyl-CoA dehydratase PASTICCINO 2B (221 aa).

Topologically, residues 1 to 11 (MTGVGSAVRRL) are cytoplasmic. A helical membrane pass occupies residues 12-32 (YLSVYNWAVFFGWAQVLYYAV). Over 33–51 (TTLLESGHEAVYAAVERPL) the chain is Lumenal. A helical membrane pass occupies residues 52-70 (QFAQTAAFLEILHGLVGLV). Over 71–76 (RSPVSA) the chain is Cytoplasmic. The chain crosses the membrane as a helical span at residues 77-95 (TLPQIGSRLFLTWGILWSF). Over 96-100 (PETHS) the chain is Lumenal. The chain crosses the membrane as a helical span at residues 101 to 121 (HILVTSLVISWSITEIIRYSF). Residues 122-141 (FGMKETFGFAPSWLLWLRYS) are Cytoplasmic-facing. A helical transmembrane segment spans residues 142–165 (TFMVLYPTGISSEVGLIYIALPYM). Residues Tyr-147 and Glu-154 contribute to the active site. Topologically, residues 166 to 184 (KATEKYCLRMPNKWNFSFD) are lumenal. A helical transmembrane segment spans residues 185–209 (FSYASILSLAVYVPGSPHMFTYMLA). At 210–221 (QRKKALAKAKAA) the chain is on the cytoplasmic side.

It belongs to the very long-chain fatty acids dehydratase HACD family.

It is found in the endoplasmic reticulum membrane. The enzyme catalyses a very-long-chain (3R)-3-hydroxyacyl-CoA = a very-long-chain (2E)-enoyl-CoA + H2O. It functions in the pathway lipid metabolism; fatty acid biosynthesis. Its function is as follows. Catalyzes the third of the four reactions of the long-chain fatty acids elongation cycle. This endoplasmic reticulum-bound enzymatic process, allows the addition of two carbons to the chain of long- and very long-chain fatty acids/VLCFAs per cycle. This enzyme catalyzes the dehydration of the 3-hydroxyacyl-CoA intermediate into trans-2,3-enoyl-CoA, within each cycle of fatty acid elongation. Thereby, it participates in the production of VLCFAs of different chain lengths that are involved in multiple biological processes as precursors of membrane lipids and lipid mediators. May be an anti-phosphatase that prevents CDKA-1 dephosphorylation and activation. Involved in the hormonal control of cell division and differentiation. Required for proliferation control of meristematic and non-meristematic cells. Negative regulator of the cell cycle. This is Very-long-chain (3R)-3-hydroxyacyl-CoA dehydratase PASTICCINO 2B (PAS2B) from Oryza sativa subsp. japonica (Rice).